An 856-amino-acid polypeptide reads, in one-letter code: Bifunctional uridylyltransferase/uridylyl-removing enzyme (856 aa).

The tract at residues 1–320 (MTLSAAPLQH…YCQVPRVTQH (320 aa)) is uridylyltransferase. The segment at 321–678 (ISEYFHAVNG…ARLADDHEGL (358 aa)) is uridylyl-removing. The HD domain occupies 439 to 561 (VDEHILMVVR…VRTPRRLAAL (123 aa)). 2 consecutive ACT domains span residues 679-760 (QVLI…LPPQ) and 788-856 (ILSI…ALRI).

Belongs to the GlnD family. It depends on Mg(2+) as a cofactor.

It catalyses the reaction [protein-PII]-L-tyrosine + UTP = [protein-PII]-uridylyl-L-tyrosine + diphosphate. It carries out the reaction [protein-PII]-uridylyl-L-tyrosine + H2O = [protein-PII]-L-tyrosine + UMP + H(+). With respect to regulation, uridylyltransferase (UTase) activity is inhibited by glutamine, while glutamine activates uridylyl-removing (UR) activity. Its function is as follows. Modifies, by uridylylation and deuridylylation, the PII regulatory proteins (GlnB and homologs), in response to the nitrogen status of the cell that GlnD senses through the glutamine level. Under low glutamine levels, catalyzes the conversion of the PII proteins and UTP to PII-UMP and PPi, while under higher glutamine levels, GlnD hydrolyzes PII-UMP to PII and UMP (deuridylylation). Thus, controls uridylylation state and activity of the PII proteins, and plays an important role in the regulation of nitrogen assimilation and metabolism. This is Bifunctional uridylyltransferase/uridylyl-removing enzyme from Chromobacterium violaceum (strain ATCC 12472 / DSM 30191 / JCM 1249 / CCUG 213 / NBRC 12614 / NCIMB 9131 / NCTC 9757 / MK).